The chain runs to 226 residues: Late protein I226R (226 aa).

The first 16 residues, 1-16 (MKMETFLVCLFHNAAG), serve as a signal peptide directing secretion. Asn164 carries N-linked (GlcNAc...) asparagine; by host glycosylation.

It belongs to the asfivirus I226R family.

In terms of biological role, plays a role in the inhibition of host NF-kappa-B and IRF3 signaling pathways. Mechanistically, promotes the degradation of host IKBKG through enhancing its ubiquitination leading to inhibition of both pathways. This is Late protein I226R from African swine fever virus (isolate Pig/Kenya/KEN-50/1950) (ASFV).